The primary structure comprises 90 residues: Probable Fe(2+)-trafficking protein (90 aa).

Belongs to the Fe(2+)-trafficking protein family.

Its function is as follows. Could be a mediator in iron transactions between iron acquisition and iron-requiring processes, such as synthesis and/or repair of Fe-S clusters in biosynthetic enzymes. In Vibrio atlanticus (strain LGP32) (Vibrio splendidus (strain Mel32)), this protein is Probable Fe(2+)-trafficking protein.